Reading from the N-terminus, the 109-residue chain is MSISFRTNTSMMNIAYKNRDLSDEEFKEEAHQFRDKEIKILEEKLKELNISCKVVGINSIKDMNEYKEIMENVNQAKEELKRIDELIAVRSSRIDFLEDKTLRITGNQR.

Positions 27-89 (KEEAHQFRDK…LKRIDELIAV (63 aa)) form a coiled coil.

This is an uncharacterized protein from Streptococcus pneumoniae.